Consider the following 134-residue polypeptide: UPF0102 protein Adeh_1910 (134 aa).

The protein belongs to the UPF0102 family.

This chain is UPF0102 protein Adeh_1910, found in Anaeromyxobacter dehalogenans (strain 2CP-C).